Consider the following 101-residue polypeptide: Ascorbate-specific PTS system EIIB component (101 aa).

Residues 1-100 form the PTS EIIB type-2 domain; the sequence is MTVRILAVCG…VIKEHFPQDV (100 aa). Cysteine 9 acts as the Phosphocysteine intermediate in catalysis. Cysteine 9 carries the post-translational modification Phosphocysteine.

The protein localises to the cytoplasm. It carries out the reaction N(pros)-phospho-L-histidyl-[protein] + L-ascorbate(out) = L-ascorbate 6-phosphate(in) + L-histidyl-[protein]. The phosphoenolpyruvate-dependent sugar phosphotransferase system (sugar PTS), a major carbohydrate active transport system, catalyzes the phosphorylation of incoming sugar substrates concomitantly with their translocation across the cell membrane. The enzyme II UlaABC PTS system is involved in ascorbate transport. The polypeptide is Ascorbate-specific PTS system EIIB component (ulaB) (Escherichia coli O157:H7).